The chain runs to 504 residues: Maturase K (504 aa).

The protein belongs to the intron maturase 2 family. MatK subfamily.

The protein resides in the plastid. It is found in the chloroplast. In terms of biological role, usually encoded in the trnK tRNA gene intron. Probably assists in splicing its own and other chloroplast group II introns. This is Maturase K from Lobularia maritima (Sweet alyssum).